Consider the following 131-residue polypeptide: UPF0102 protein YraN (131 aa).

Polar residues predominate over residues Met-1 to Thr-19. Positions Met-1–Gly-20 are disordered.

It belongs to the UPF0102 family.

The chain is UPF0102 protein YraN from Escherichia coli O8 (strain IAI1).